A 235-amino-acid polypeptide reads, in one-letter code: N,O-diacetylmuramidase (235 aa).

Residues M1–A17 form the signal peptide. Residues S29 to G235 enclose the Ch-type lysozyme domain. Residues D34, D122, and E124 contribute to the active site. Cysteines 132 and 171 form a disulfide.

It belongs to the glycosyl hydrolase 25 family.

The protein resides in the secreted. It catalyses the reaction Hydrolysis of (1-&gt;4)-beta-linkages between N-acetylmuramic acid and N-acetyl-D-glucosamine residues in a peptidoglycan and between N-acetyl-D-glucosamine residues in chitodextrins.. Its function is as follows. This enzyme has both lysozyme (acetylmuramidase) and diacetylmuramidase activities. The sequence is that of N,O-diacetylmuramidase from Arthroderma benhamiae (strain ATCC MYA-4681 / CBS 112371) (Trichophyton mentagrophytes).